Consider the following 537-residue polypeptide: Extracellular exo-inulinase inuE (537 aa).

The first 19 residues, 1 to 19 (MARLLKAVTVCALAGIAHA), serve as a signal peptide directing secretion. The active site involves Asp41. 8 N-linked (GlcNAc...) asparagine glycosylation sites follow: Asn49, Asn67, Asn112, Asn300, Asn363, Asn398, Asn430, and Asn531.

It belongs to the glycosyl hydrolase 32 family.

Its subcellular location is the secreted. The catalysed reaction is Hydrolysis of terminal, non-reducing (2-&gt;1)- and (2-&gt;6)-linked beta-D-fructofuranose residues in fructans.. Its activity is regulated as follows. The catalytic activity is increased by manganese cathions, but strongly inhibited by other metal ions such as copper, aluminum, silver, iron, nickel, zinc and magnesium cathions. Exo-inulinase involved in utilization of the plant storage polymer inulin, consisting of fructooligosaccharides with a degree of polymerization (DP) value from 2 to 60. Splits off terminal fructose units successively from the non-reducing end of the inulin molecule, and also hydrolyze sucrose and raffinose. The protein is Extracellular exo-inulinase inuE (exoI) of Aspergillus ficuum.